A 199-amino-acid polypeptide reads, in one-letter code: Recombination protein RecR (199 aa).

Residues 56–71 (CAVCGNIAEETQCRIC) form a C4-type zinc finger. Residues 79–174 (TVICVVEEPK…KVTRLASGLP (96 aa)) form the Toprim domain.

Belongs to the RecR family.

May play a role in DNA repair. It seems to be involved in an RecBC-independent recombinational process of DNA repair. It may act with RecF and RecO. The chain is Recombination protein RecR from Thermobifida fusca (strain YX).